The following is a 339-amino-acid chain: Photosystem II assembly lipoprotein Ycf48 (339 aa).

The N-terminal stretch at 1 to 22 (MVIVKSWQKIFTLLVVLLLCIG) is a signal peptide. The N-palmitoyl cysteine moiety is linked to residue C23. C23 is lipidated: S-diacylglycerol cysteine.

It belongs to the Ycf48 family. Part of early PSII assembly complexes which includes D1 (psbA) and PsbI; not found in mature PSII. Binds to the lumenal side of PSII complexes. Interacts with YidC.

It is found in the cellular thylakoid membrane. In terms of biological role, a factor required for optimal assembly of photosystem II (PSII), acting in the early stages of PSII assembly. Also plays a role in replacement of photodamaged D1 (psbA). Assists YidC in synthesis of chlorophyll-binding proteins. The protein is Photosystem II assembly lipoprotein Ycf48 of Nostoc sp. (strain PCC 7120 / SAG 25.82 / UTEX 2576).